Consider the following 559-residue polypeptide: D-2-hydroxyglutarate dehydrogenase, mitochondrial (559 aa).

A mitochondrion-targeting transit peptide spans 1-78; the sequence is MMMQKLRRSG…GMLLQQYKCF (78 aa). The 180-residue stretch at 130–309 folds into the FAD-binding PCMH-type domain; that stretch reads YKGSSKLMLL…TKVSILTQPK (180 aa).

It belongs to the FAD-binding oxidoreductase/transferase type 4 family. In terms of assembly, homodimer. Requires FAD as cofactor.

It is found in the mitochondrion. The enzyme catalyses (R)-2-hydroxyglutarate + A = 2-oxoglutarate + AH2. Its function is as follows. Catalyzes the oxidation of (R)-2-hydroxyglutarate to 2-oxoglutarate. May be involved in the catabolism of propionyl-CoA derived from beta-oxidation. Involved in degradation of lysine for the supply of carbon and electrons to the ETF/ETFQO complex during dark-induced sugar starvation. The protein is D-2-hydroxyglutarate dehydrogenase, mitochondrial (D2HGDH) of Arabidopsis thaliana (Mouse-ear cress).